The sequence spans 517 residues: Acyltransferase AFT15-1 (517 aa).

Histidine 180 functions as the Proton acceptor in the catalytic mechanism.

The protein belongs to the plant acyltransferase family.

Its pathway is mycotoxin biosynthesis. Its function is as follows. Acyltransferase; part of the gene clusters that mediate the biosynthesis of the host-selective toxins (HSTs) AF-toxins responsible for Alternaria black spot of strawberry disease by the strawberry pathotype. AF-toxin I and III are valine derivatives of 2,3-dyhydroxy-isovaleric acid and 2-hydroxy-isovaleric acid respectively, while AF II is an isoleucine derivative of 2-hydroxy-valeric acid. These derivatives are bound to a 9,10-epoxy-8-hydroxy-9-methyl-decatrienoic acid (EDA) moiety. On cellular level, AF-toxins affect plasma membrane of susceptible cells and cause a sudden increase in loss of K(+) after a few minutes of toxin treatment. The aldo-keto reductase AFTS1 catalyzes the conversion of 2-keto-isovaleric acid (2-KIV) to 2-hydroxy-isovaleric acid (2-HIV) by reduction of its ketone to an alcohol. The acyl-CoA ligase AFT1, the hydrolase AFT2 and the enoyl-CoA hydratases AFT3 and AFT6, but also the polyketide synthase AFT9, the acyl-CoA dehydrogenase AFT10, the cytochrome P450 monooxygenase AFT11 and the oxidoreductase AFT12 are all involved in the biosynthesis of the AK-, AF- and ACT-toxin common EDA structural moiety. The exact function of each enzyme, and of additional enzymes identified within the AF-toxin clusters have still to be determined. The chain is Acyltransferase AFT15-1 (AFT15-1) from Alternaria alternata (Alternaria rot fungus).